The primary structure comprises 736 residues: Melanotransferrin (736 aa).

The first 19 residues, 1-19 (MRCRSAAMWIFLALRTALG), serve as a signal peptide directing secretion. Transferrin-like domains follow at residues 23–357 (VRWC…GLLC) and 366–706 (LRWC…GMQS). 2 disulfide bridges follow: Cys26-Cys63 and Cys36-Cys54. Fe(3+)-binding residues include Asp78 and Tyr107. N-linked (GlcNAc...) asparagine glycosylation occurs at Asn118. 4 cysteine pairs are disulfide-bonded: Cys130-Cys216, Cys172-Cys189, Cys186-Cys199, and Cys257-Cys271. Hydrogencarbonate is bound at residue Thr132. Asn135 carries N-linked (GlcNAc...) asparagine glycosylation. Residues Arg136, Val138, and Gly139 each contribute to the hydrogencarbonate site. Tyr210 contributes to the Fe(3+) binding site. Fe(3+) is bound by residues His279 and Tyr451. Asn515 carries an N-linked (GlcNAc...) asparagine glycan. His625 serves as a coordination point for Fe(3+). Gly711 is lipidated: GPI-anchor amidated glycine. Residues 712–736 (AAVGAPGASLLPLLPLAVGLLLSSL) constitute a propeptide, removed in mature form.

This sequence belongs to the transferrin family.

The protein localises to the cell membrane. In terms of biological role, involved in iron cellular uptake. Seems to be internalized and then recycled back to the cell membrane. Binds a single atom of iron per subunit. Could also bind zinc. This Oryctolagus cuniculus (Rabbit) protein is Melanotransferrin.